Here is a 558-residue protein sequence, read N- to C-terminus: Poly(A) polymerase PAPalpha (558 aa).

Residues 1-17 (MNTKTYGVTEPISTNGP) are compositionally biased toward polar residues. A disordered region spans residues 1–20 (MNTKTYGVTEPISTNGPTPK). Residues 86–88 (FGS), 99–101 (DID), Asp153, Lys214, Tyr223, and 232–233 (GV) each bind ATP. 3 residues coordinate Mg(2+): Asp99, Asp101, and Asp153. The disordered stretch occupies residues 516-558 (VYEDGEERPKKSGKKRKKVIKEDGQKRVRNESPASSASVNGSS). The span at 535–545 (IKEDGQKRVRN) shows a compositional bias: basic and acidic residues. Over residues 547–558 (SPASSASVNGSS) the composition is skewed to low complexity.

It belongs to the poly(A) polymerase family. Requires Mg(2+) as cofactor. Mn(2+) is required as a cofactor.

It is found in the nucleus. It catalyses the reaction RNA(n) + ATP = RNA(n)-3'-adenine ribonucleotide + diphosphate. Its function is as follows. Polymerase that creates the 3'-poly(A) tail of mRNA's. May acquire specificity through interaction with a cleavage and polyadenylation factor. This Candida albicans (strain SC5314 / ATCC MYA-2876) (Yeast) protein is Poly(A) polymerase PAPalpha (PAPALPHA).